Reading from the N-terminus, the 305-residue chain is Transcriptional activator protein PfeR (305 aa).

The Response regulatory domain maps to 79-192 (RLLLVEDDPR…ELDARTDALL (114 aa)). Aspartate 128 is modified (4-aspartylphosphate). The segment at residues 200-301 (LPLAQRRDTR…VRGQGYLLVE (102 aa)) is a DNA-binding region (ompR/PhoB-type).

In terms of processing, phosphorylated by PfeS.

It is found in the cytoplasm. In terms of biological role, member of the two-component regulatory system PfeR/PfeS. Activates expression of the ferric enterobactin receptor. The polypeptide is Transcriptional activator protein PfeR (pfeR) (Pseudomonas aeruginosa (strain ATCC 15692 / DSM 22644 / CIP 104116 / JCM 14847 / LMG 12228 / 1C / PRS 101 / PAO1)).